The chain runs to 309 residues: Succinate--CoA ligase [ADP-forming] subunit alpha-2, mitochondrial (309 aa).

A hydrogenosome-targeting transit peptide spans 1–9 (MLSSSFERN). CoA is bound by residues lysine 54 and 107–109 (ITE). Position 171 (tyrosine 171) interacts with substrate. The active-site Tele-phosphohistidine intermediate is the histidine 262.

It belongs to the succinate/malate CoA ligase alpha subunit family. In terms of assembly, heterodimer of an alpha and a beta subunit.

The protein resides in the hydrogenosome lumen. The enzyme catalyses succinate + ATP + CoA = succinyl-CoA + ADP + phosphate. It participates in carbohydrate metabolism; tricarboxylic acid cycle; succinate from succinyl-CoA (ligase route): step 1/1. Its function is as follows. Succinyl-CoA synthetase functions in the citric acid cycle (TCA), coupling the hydrolysis of succinyl-CoA to the synthesis of ATP and thus represents the only step of substrate-level phosphorylation in the TCA. The alpha subunit of the enzyme binds the substrates coenzyme A and phosphate, while succinate binding and nucleotide specificity is provided by the beta subunit. This is Succinate--CoA ligase [ADP-forming] subunit alpha-2, mitochondrial (ALPHA-SCS2) from Trichomonas vaginalis.